An 859-amino-acid polypeptide reads, in one-letter code: Bifunctional levopimaradiene synthase, chloroplastic (859 aa).

A chloroplast-targeting transit peptide spans 1 to 52; the sequence is MALLSSSLSSHIPTGAHHLTLNAYANTQCIPHFFSTLNAGTSAGKRSSLYLR. Mg(2+) is bound by residues D392, D394, D611, D615, N755, and E763. The DXDD motif motif lies at 392-395; the sequence is DIDD. Positions 611–615 match the DDXXD motif motif; sequence DDLYD.

Belongs to the terpene synthase family. Tpsd subfamily. It depends on Mg(2+) as a cofactor. Mn(2+) is required as a cofactor.

It is found in the plastid. The protein localises to the chloroplast. The catalysed reaction is (+)-copalyl diphosphate = abieta-8(14),12-diene + diphosphate. The enzyme catalyses (+)-copalyl diphosphate = abieta-7,13-diene + diphosphate. It functions in the pathway secondary metabolite biosynthesis; terpenoid biosynthesis. Its pathway is terpene metabolism; oleoresin biosynthesis. Functionally, terpene synthase (di-TPS) involved in the biosynthesis of diterpene natural products included in conifer oleoresin secretions and volatile emissions; these compounds contribute to biotic and abiotic stress defense against herbivores and pathogens. Catalyzes the conversion of (+)-copalyl diphosphate ((+)-CPP) to isopimaradiene. This is Bifunctional levopimaradiene synthase, chloroplastic from Picea sitchensis (Sitka spruce).